A 421-amino-acid polypeptide reads, in one-letter code: Large ribosomal subunit protein uL4 (421 aa).

A2 bears the N-acetylalanine mark. An N6-acetyllysine modification is found at K14. The residue at position 97 (R97) is an Omega-N-methylarginine. N6-acetyllysine is present on K106. K239 participates in a covalent cross-link: Glycyl lysine isopeptide (Lys-Gly) (interchain with G-Cter in SUMO2). K259 is modified (N6-acetyllysine). T266 bears the Phosphothreonine mark. Phosphoserine occurs at positions 290 and 295. R300 carries the citrulline modification. Residue K327 forms a Glycyl lysine isopeptide (Lys-Gly) (interchain with G-Cter in SUMO2) linkage. 2 positions are modified to N6-acetyllysine: K333 and K353. K364 is modified (N6-acetyllysine; alternate). K364 is covalently cross-linked (Glycyl lysine isopeptide (Lys-Gly) (interchain with G-Cter in SUMO1); alternate). Residue S365 is modified to Phosphoserine. Basic and acidic residues predominate over residues 365-379 (SEKIVPEKGAGDKKP). Residues 365 to 421 (SEKIVPEKGAGDKKPAVGKKGKKPVDAKKLKKPAGKKVVTKKPAEKKPTTEEKKSAA) form a disordered region. The span at 393–404 (KLKKPAGKKVVT) shows a compositional bias: basic residues. Residues 406 to 421 (KPAEKKPTTEEKKSAA) show a composition bias toward basic and acidic residues.

Belongs to the universal ribosomal protein uL4 family. Component of the large ribosomal subunit. May bind IPO9 with low affinity. Interacts with RBM3. Citrullinated by PADI4.

It localises to the cytoplasm. Its function is as follows. Component of the large ribosomal subunit. The ribosome is a large ribonucleoprotein complex responsible for the synthesis of proteins in the cell. This Rattus norvegicus (Rat) protein is Large ribosomal subunit protein uL4 (Rpl4).